Reading from the N-terminus, the 87-residue chain is Large ribosomal subunit protein bL27 (87 aa).

Belongs to the bacterial ribosomal protein bL27 family.

The polypeptide is Large ribosomal subunit protein bL27 (Stenotrophomonas maltophilia (strain R551-3)).